Reading from the N-terminus, the 338-residue chain is 4-hydroxythreonine-4-phosphate dehydrogenase (338 aa).

Residues His-136 and Thr-137 each coordinate substrate. A divalent metal cation contacts are provided by His-173, His-218, and His-273. Residues Lys-281, Asn-290, and Arg-299 each contribute to the substrate site.

It belongs to the PdxA family. In terms of assembly, homodimer. Zn(2+) is required as a cofactor. Requires Mg(2+) as cofactor. The cofactor is Co(2+).

Its subcellular location is the cytoplasm. The enzyme catalyses 4-(phosphooxy)-L-threonine + NAD(+) = 3-amino-2-oxopropyl phosphate + CO2 + NADH. The protein operates within cofactor biosynthesis; pyridoxine 5'-phosphate biosynthesis; pyridoxine 5'-phosphate from D-erythrose 4-phosphate: step 4/5. Its function is as follows. Catalyzes the NAD(P)-dependent oxidation of 4-(phosphooxy)-L-threonine (HTP) into 2-amino-3-oxo-4-(phosphooxy)butyric acid which spontaneously decarboxylates to form 3-amino-2-oxopropyl phosphate (AHAP). The chain is 4-hydroxythreonine-4-phosphate dehydrogenase from Ralstonia nicotianae (strain ATCC BAA-1114 / GMI1000) (Ralstonia solanacearum).